Reading from the N-terminus, the 243-residue chain is Aquaporin SIP1-2 (243 aa).

2 helical membrane-spanning segments follow: residues 9 to 29 and 45 to 65; these read AAAA…TLGA and FALL…NILC. Residues 74–76 carry the NPA 1 motif; that stretch reads NPT. The next 3 helical transmembrane spans lie at 98-118, 136-156, and 163-183; these read LPAQ…LMPA, GAGA…LIIV, and IIKT…GAAY. The NPA 2 motif lies at 189 to 191; sequence NPA. A helical transmembrane segment spans residues 211-231; it reads VYWICPFIGAILAAWIFRAMF.

The protein belongs to the MIP/aquaporin (TC 1.A.8) family. SIP (TC 1.A.8.10) subfamily.

It localises to the membrane. Functionally, aquaporins facilitate the transport of water and small neutral solutes across cell membranes. The sequence is that of Aquaporin SIP1-2 (SIP1-2) from Zea mays (Maize).